The chain runs to 365 residues: Phosphate acyltransferase (365 aa).

This sequence belongs to the PlsX family. As to quaternary structure, homodimer. Probably interacts with PlsY.

Its subcellular location is the cytoplasm. It carries out the reaction a fatty acyl-[ACP] + phosphate = an acyl phosphate + holo-[ACP]. Its pathway is lipid metabolism; phospholipid metabolism. Its function is as follows. Catalyzes the reversible formation of acyl-phosphate (acyl-PO(4)) from acyl-[acyl-carrier-protein] (acyl-ACP). This enzyme utilizes acyl-ACP as fatty acyl donor, but not acyl-CoA. This Klebsiella pneumoniae subsp. pneumoniae (strain ATCC 700721 / MGH 78578) protein is Phosphate acyltransferase.